A 453-amino-acid chain; its full sequence is Allantoinase (453 aa).

Zn(2+) is bound by residues H59, H61, K146, H186, H242, and D315. K146 is subject to N6-carboxylysine.

Belongs to the metallo-dependent hydrolases superfamily. Allantoinase family. As to quaternary structure, homotetramer. Requires Zn(2+) as cofactor. Carboxylation allows a single lysine to coordinate two zinc ions.

The catalysed reaction is (S)-allantoin + H2O = allantoate + H(+). The protein operates within nitrogen metabolism; (S)-allantoin degradation; allantoate from (S)-allantoin: step 1/1. Functionally, catalyzes the conversion of allantoin (5-ureidohydantoin) to allantoic acid by hydrolytic cleavage of the five-member hydantoin ring. This chain is Allantoinase, found in Escherichia coli (strain K12 / MC4100 / BW2952).